Reading from the N-terminus, the 1395-residue chain is DNA-directed RNA polymerase subunit beta' (1395 aa).

Residues Cys70, Cys72, Cys85, and Cys88 each coordinate Zn(2+). 3 residues coordinate Mg(2+): Asp470, Asp472, and Asp474. 4 residues coordinate Zn(2+): Cys815, Cys889, Cys896, and Cys899.

It belongs to the RNA polymerase beta' chain family. In terms of assembly, the RNAP catalytic core consists of 2 alpha, 1 beta, 1 beta' and 1 omega subunit. When a sigma factor is associated with the core the holoenzyme is formed, which can initiate transcription. Mg(2+) serves as cofactor. The cofactor is Zn(2+).

The catalysed reaction is RNA(n) + a ribonucleoside 5'-triphosphate = RNA(n+1) + diphosphate. Functionally, DNA-dependent RNA polymerase catalyzes the transcription of DNA into RNA using the four ribonucleoside triphosphates as substrates. The polypeptide is DNA-directed RNA polymerase subunit beta' (Anaeromyxobacter sp. (strain Fw109-5)).